The primary structure comprises 215 residues: Cytochrome b6 (215 aa).

The chain crosses the membrane as a helical span at residues 32–52 (IFYCLGGITLTCFIIQVATGF). Residue cysteine 35 coordinates heme c. 2 residues coordinate heme b: histidine 86 and histidine 100. A run of 3 helical transmembrane segments spans residues 90–110 (ASMM…TGGF), 116–136 (LTWV…VTGY), and 186–206 (LHTF…FLMI). Residues histidine 187 and histidine 202 each coordinate heme b.

It belongs to the cytochrome b family. PetB subfamily. As to quaternary structure, the 4 large subunits of the cytochrome b6-f complex are cytochrome b6, subunit IV (17 kDa polypeptide, PetD), cytochrome f and the Rieske protein, while the 4 small subunits are PetG, PetL, PetM and PetN. The complex functions as a dimer. Requires heme b as cofactor. Heme c is required as a cofactor.

Its subcellular location is the plastid. The protein localises to the chloroplast thylakoid membrane. Its function is as follows. Component of the cytochrome b6-f complex, which mediates electron transfer between photosystem II (PSII) and photosystem I (PSI), cyclic electron flow around PSI, and state transitions. The chain is Cytochrome b6 from Zygnema circumcarinatum (Green alga).